A 277-amino-acid polypeptide reads, in one-letter code: Protein CUSTOS (277 aa).

Disordered stretches follow at residues 1 to 81 (MVAP…QTTP), 108 to 182 (TQQA…QRCR), and 238 to 277 (SVNGDPVLSGTKKKKKKKAKKAREASLCPPAECAAAEPKN). Low complexity predominate over residues 9–18 (SDSESSSSDS). Residue serine 62 is modified to Phosphoserine. The span at 63-72 (RRREVNQHDE) shows a compositional bias: basic and acidic residues. At threonine 80 the chain carries Phosphothreonine. Residues 106-141 (KKTQQARLQQEAKEQQEAKEQQAAKEEQAAKKEEDG) are a coiled coil. The span at 115-142 (QEAKEQQEAKEQQAAKEEQAAKKEEDGF) shows a compositional bias: basic and acidic residues. A phosphoserine mark is found at serine 158 and serine 238. Positions 248-258 (TKKKKKKKAKK) are enriched in basic residues. Residues 249-256 (KKKKKKKA) carry the Nucleolar localization signal (NLS) motif. Positions 265–277 (CPPAECAAAEPKN) are enriched in low complexity.

This sequence belongs to the CUSTOS family.

It localises to the nucleus envelope. Plays a role in the regulation of Wnt signaling pathway during early development. This is Protein CUSTOS from Rattus norvegicus (Rat).